The primary structure comprises 427 residues: ATP synthase subunit beta (427 aa).

160-167 (GGAGVGKT) serves as a coordination point for ATP.

The protein belongs to the ATPase alpha/beta chains family. F-type ATPases have 2 components, CF(1) - the catalytic core - and CF(0) - the membrane proton channel. CF(1) has five subunits: alpha(3), beta(3), gamma(1), delta(1), epsilon(1). CF(0) has three main subunits: a(1), b(2) and c(9-12). The alpha and beta chains form an alternating ring which encloses part of the gamma chain. CF(1) is attached to CF(0) by a central stalk formed by the gamma and epsilon chains, while a peripheral stalk is formed by the delta and b chains.

The protein resides in the cell membrane. The catalysed reaction is ATP + H2O + 4 H(+)(in) = ADP + phosphate + 5 H(+)(out). Functionally, produces ATP from ADP in the presence of a proton gradient across the membrane. The catalytic sites are hosted primarily by the beta subunits. The protein is ATP synthase subunit beta of Peptococcus niger.